Reading from the N-terminus, the 327-residue chain is Peroxidase N (327 aa).

The first 28 residues, 1–28 (MKTQTKVMGGHVLLTVFTLCMLCSAVRA), serve as a signal peptide directing secretion. Position 29 is a pyrrolidone carboxylic acid (glutamine 29). 4 cysteine pairs are disulfide-bonded: cysteine 39-cysteine 116, cysteine 72-cysteine 77, cysteine 122-cysteine 323, and cysteine 200-cysteine 232. The Proton acceptor role is filled by histidine 70. Ca(2+) is bound by residues aspartate 71, valine 74, glycine 76, aspartate 78, and serine 80. N-linked (GlcNAc...) asparagine glycosylation is present at asparagine 155. Position 163 (proline 163) interacts with substrate. An N-linked (GlcNAc...) asparagine glycan is attached at asparagine 182. Histidine 193 provides a ligand contact to heme b. Threonine 194 contributes to the Ca(2+) binding site. Asparagine 209 and asparagine 239 each carry an N-linked (GlcNAc...) asparagine glycan. Residue aspartate 245 participates in Ca(2+) binding. Asparagine 247 carries N-linked (GlcNAc...) asparagine glycosylation. Ca(2+)-binding residues include serine 248 and aspartate 253. N-linked (GlcNAc...) asparagine glycosylation occurs at asparagine 281.

This sequence belongs to the peroxidase family. Classical plant (class III) peroxidase subfamily. Ca(2+) is required as a cofactor. The cofactor is heme b.

It localises to the secreted. It catalyses the reaction 2 a phenolic donor + H2O2 = 2 a phenolic radical donor + 2 H2O. In terms of biological role, removal of H(2)O(2), oxidation of toxic reductants, biosynthesis and degradation of lignin, suberization, auxin catabolism, response to environmental stresses such as wounding, pathogen attack and oxidative stress. These functions might be dependent on each isozyme/isoform in each plant tissue. This chain is Peroxidase N (HRPN), found in Armoracia rusticana (Horseradish).